The sequence spans 119 residues: MIRKIEKKEIRNRIHRRIRRKLSGTAERPRLAVFRSVAHIYAQVIDDAQGQTLVSASSVDKDGKSKGGNVAAAKAIGKLVAERAKEKGIKSVVFDRGGYQYHGRVKALADAAREAGLEF.

The protein belongs to the universal ribosomal protein uL18 family. In terms of assembly, part of the 50S ribosomal subunit; part of the 5S rRNA/L5/L18/L25 subcomplex. Contacts the 5S and 23S rRNAs.

In terms of biological role, this is one of the proteins that bind and probably mediate the attachment of the 5S RNA into the large ribosomal subunit, where it forms part of the central protuberance. In Solibacter usitatus (strain Ellin6076), this protein is Large ribosomal subunit protein uL18.